The chain runs to 214 residues: Ribosomal RNA small subunit methyltransferase G (214 aa).

Residues G77, L82, V128 to E129, and R143 each bind S-adenosyl-L-methionine.

Belongs to the methyltransferase superfamily. RNA methyltransferase RsmG family.

Its subcellular location is the cytoplasm. It carries out the reaction guanosine(527) in 16S rRNA + S-adenosyl-L-methionine = N(7)-methylguanosine(527) in 16S rRNA + S-adenosyl-L-homocysteine. Its function is as follows. Specifically methylates the N7 position of guanine in position 527 of 16S rRNA. The chain is Ribosomal RNA small subunit methyltransferase G from Nitrosococcus oceani (strain ATCC 19707 / BCRC 17464 / JCM 30415 / NCIMB 11848 / C-107).